The chain runs to 256 residues: Nuclear shuttle protein (256 aa).

A disordered region spans residues 1–53 (MYPSRNKRGSYFNQRRQYSRNHVWKRPTAAKRHDWKRRPSNTSKPNDEPKMSA). Residues 17-39 (QYSRNHVWKRPTAAKRHDWKRRP) are compositionally biased toward basic residues. The short motif at 21–42 (NHVWKRPTAAKRHDWKRRPSNT) is the Bipartite nuclear localization signal element. The short motif at 81–96 (DLGRSEPNRSRSYIRL) is the Nuclear localization signal element. The interval 150–187 (ELFGARIHSHGNLSVTPALKDRYYIRHVCKRVLSVEKD) is interaction with Arabidopsis thaliana NSI protein.

Belongs to the begomovirus nuclear shuttle protein family. Binds to single-stranded and double-stranded viral DNA. Interacts with the host nuclear shuttle interacting (NSI) protein. This interaction may allow NSP to recruit NSI monomers to the viral genome and thus regulate nuclear export of viral genome by NSP.

It localises to the host nucleus. Its subcellular location is the host cytoplasm. The protein resides in the host cell membrane. Binds to the genomic viral ssDNA, shuttles it into and out of the cell nucleus. Begomoviruses use 2 proteins to transport their DNA from cell to cell. The nuclear shuttle protein (NSP) shuttles it between nucleus and cytoplasm and the movement protein (MP) probably transports the DNA-NSP complex to the cell periphery and facilitates movement across the cell wall. This is Nuclear shuttle protein from Abutilon mosaic virus (isolate West India) (AbMV).